A 381-amino-acid polypeptide reads, in one-letter code: Succinyl-diaminopimelate desuccinylase (381 aa).

Zn(2+) is bound at residue H71. D73 is an active-site residue. D104 lines the Zn(2+) pocket. The Proton acceptor role is filled by E136. Zn(2+) is bound by residues E137, E166, and H351.

Belongs to the peptidase M20A family. DapE subfamily. As to quaternary structure, homodimer. Zn(2+) serves as cofactor. It depends on Co(2+) as a cofactor.

It carries out the reaction N-succinyl-(2S,6S)-2,6-diaminopimelate + H2O = (2S,6S)-2,6-diaminopimelate + succinate. The protein operates within amino-acid biosynthesis; L-lysine biosynthesis via DAP pathway; LL-2,6-diaminopimelate from (S)-tetrahydrodipicolinate (succinylase route): step 3/3. Its function is as follows. Catalyzes the hydrolysis of N-succinyl-L,L-diaminopimelic acid (SDAP), forming succinate and LL-2,6-diaminopimelate (DAP), an intermediate involved in the bacterial biosynthesis of lysine and meso-diaminopimelic acid, an essential component of bacterial cell walls. This is Succinyl-diaminopimelate desuccinylase from Ehrlichia chaffeensis (strain ATCC CRL-10679 / Arkansas).